A 529-amino-acid polypeptide reads, in one-letter code: MSPSEYAREVAKRRTFAIISHPDAGKTTITEKVLLFGQAIQVAGTVKGRGSSQHAKSDWMEMEKQRGISITTSVMQFPYHDCLVNLLDTPGHEDFSEDTYRTLTAVDCCLMVIDAAKGVEDRTRKLMEVTRLRDTPILTFMNKLDRDIRDPMELLDEVESELRIACAPITWPIGCGKLFKGVYHLYKDETYLYQSGKGHTIQEVRVIKGLDNPLLDTAVGEDLAAQLREELELVQGASTEFEEEAFLNGQLTPVFFGTALGNFGVDHMLDGLVAWAPAPMPRMTDVRKVSADEEKFSGFVFKIQANMDPKHRDRVAFMRVVSGRYDKGMKLRQVRTGKDVVIADALTFMAGDRAHVEEAYPGDIIGLHNHGTIQIGDTFTQGEEMKFTGIPNFAPELFRRIRLRDPLKQKQLLKGLVQLSEEGAVQVFRPVANNDLIVGAVGVLQFDVVVARLKSEYNVEAIYESVNVSTARWVECDDVKKFDEFQRKNELHLALDGGDNLAYIAPTMVNLNLTQERYPEVRFRKTREH.

Positions 11–280 constitute a tr-type G domain; the sequence is AKRRTFAIIS…GLVAWAPAPM (270 aa). Residues 20–27, 88–92, and 142–145 contribute to the GTP site; these read SHPDAGKT, DTPGH, and NKLD.

The protein belongs to the TRAFAC class translation factor GTPase superfamily. Classic translation factor GTPase family. PrfC subfamily.

The protein resides in the cytoplasm. Functionally, increases the formation of ribosomal termination complexes and stimulates activities of RF-1 and RF-2. It binds guanine nucleotides and has strong preference for UGA stop codons. It may interact directly with the ribosome. The stimulation of RF-1 and RF-2 is significantly reduced by GTP and GDP, but not by GMP. This is Peptide chain release factor 3 from Edwardsiella ictaluri (strain 93-146).